The chain runs to 2473 residues: Reducing polyketide synthase grgA (2473 aa).

Residues 15 to 446 enclose the Ketosynthase family 3 (KS3) domain; sequence REPIAIVGSS…GTNAHAIIES (432 aa). Residues Cys-188, His-327, and His-366 each act as for beta-ketoacyl synthase activity in the active site. The Malonyl-CoA:ACP transacylase (MAT) domain maps to 559-882; that stretch reads IFTGQGAQWA…SGVLKRGQNA (324 aa). The interval 956–1099 is N-terminal hotdog fold; sequence HELLGHSVTH…GGVRLWLGEP (144 aa). The dehydratase (DH) domain stretch occupies residues 956 to 1260; that stretch reads HELLGHSVTH…IHLSAVGQRR (305 aa). Residues 956–1262 form the PKS/mFAS DH domain; the sequence is HELLGHSVTH…LSAVGQRRDP (307 aa). His-990 acts as the Proton acceptor; for dehydratase activity in catalysis. A C-terminal hotdog fold region spans residues 1114 to 1262; the sequence is MEALDMEQLY…LSAVGQRRDP (149 aa). Catalysis depends on Asp-1172, which acts as the Proton donor; for dehydratase activity. The interval 1300 to 1606 is methyltransfrase (MT) domain; sequence TAYFYLRQLR…PSFCSVIVAQ (307 aa). The 174-residue stretch at 2108–2281 folds into the Ketoreductase (KR) domain; it reads TYLLCGMTGD…AGSVIHIAIL (174 aa). The region spanning 2388-2473 is the Carrier domain; sequence AECLVILESC…LVEWRRLNKS (86 aa). O-(pantetheine 4'-phosphoryl)serine is present on Ser-2426.

The cofactor is pantetheine 4'-phosphate.

It participates in secondary metabolite biosynthesis. Reducing polyketide synthase; part of the gene cluster that mediates the biosynthesis of gregatin A, a fungal polyketide featuring an alkylated furanone core. The PKS grgA synthesizes C11 and C4 polyketide chains in the presence and absence of the trans-enoyl reductase grgB, respectively. The polyketide transferase grgF is then responsible for the fusion of the two carbon chains to produce the furanone skeleton of gregatin A. Next, the cytochrome P450 monooxygenase grgG accepts performs the oxidative cyclization to furnish the gregatin scaffold and leads to the formation of desmethylgregatin A. Finally, the O-methyltransferase grgD methylates the carboxyl group of desmethylgregatin A to provide gregatin A. This chain is Reducing polyketide synthase grgA, found in Penicillium sp.